The chain runs to 176 residues: Small ribosomal subunit protein uS4 (176 aa).

Residues R104–P166 enclose the S4 RNA-binding domain.

It belongs to the universal ribosomal protein uS4 family. As to quaternary structure, part of the 30S ribosomal subunit. Contacts protein S5. The interaction surface between S4 and S5 is involved in control of translational fidelity.

Functionally, one of the primary rRNA binding proteins, it binds directly to 16S rRNA where it nucleates assembly of the body of the 30S subunit. With S5 and S12 plays an important role in translational accuracy. This Sulfolobus acidocaldarius (strain ATCC 33909 / DSM 639 / JCM 8929 / NBRC 15157 / NCIMB 11770) protein is Small ribosomal subunit protein uS4 (rps4).